The following is a 263-amino-acid chain: Insertion sequence IS21-like putative ATP-binding protein (263 aa).

ATP is bound at residue 114 to 121; the sequence is GPSGTGKT.

It belongs to the IS21/IS1162 putative ATP-binding protein family.

This is Insertion sequence IS21-like putative ATP-binding protein (tnpB) from Bacteroides fragilis.